Here is a 624-residue protein sequence, read N- to C-terminus: ADP,ATP carrier protein 1, chloroplastic (624 aa).

The transit peptide at Met-1–Lys-79 directs the protein to the chloroplast. At Ala-80 the chain carries N-acetylalanine. Helical transmembrane passes span Val-108 to Phe-128, Ala-182 to Met-202, Leu-240 to Phe-260, Ala-315 to Asn-335, Leu-446 to Val-466, and Leu-545 to Ala-565. Residues Ser-579–Leu-624 form a disordered region. Positions Glu-602–Leu-624 are enriched in low complexity.

The protein belongs to the ADP/ATP translocase tlc (TC 2.A.12.2) family.

The protein resides in the plastid. It localises to the chloroplast membrane. Its function is as follows. May function as an ATP importer. The sequence is that of ADP,ATP carrier protein 1, chloroplastic (AATP1) from Arabidopsis thaliana (Mouse-ear cress).